The primary structure comprises 472 residues: Glutamate synthase [NADPH] small chain (472 aa).

The region spanning 41–72 (QDAAAQAHRCLHCGNPYCEWKCPVHNYIPNWL) is the 4Fe-4S ferredoxin-type domain. [4Fe-4S] cluster contacts are provided by C50, C53, C58, and C62.

It depends on [4Fe-4S] cluster as a cofactor.

It carries out the reaction 2 L-glutamate + NADP(+) = L-glutamine + 2-oxoglutarate + NADPH + H(+). It functions in the pathway amino-acid biosynthesis; L-glutamate biosynthesis via GLT pathway; L-glutamate from 2-oxoglutarate and L-glutamine (NADP(+) route): step 1/1. Its pathway is energy metabolism; nitrogen metabolism. Catalyzes the conversion of L-glutamine and 2-oxoglutarate into two molecules of L-glutamate. In Halomonas elongata (strain ATCC 33173 / DSM 2581 / NBRC 15536 / NCIMB 2198 / 1H9), this protein is Glutamate synthase [NADPH] small chain.